The following is a 365-amino-acid chain: tRNA/tmRNA (uracil-C(5))-methyltransferase (365 aa).

5 residues coordinate S-adenosyl-L-methionine: Gln189, Tyr217, Asn222, Glu238, and Asp298. Cys323 acts as the Nucleophile in catalysis. Glu357 serves as the catalytic Proton acceptor.

This sequence belongs to the class I-like SAM-binding methyltransferase superfamily. RNA M5U methyltransferase family. TrmA subfamily.

The enzyme catalyses uridine(54) in tRNA + S-adenosyl-L-methionine = 5-methyluridine(54) in tRNA + S-adenosyl-L-homocysteine + H(+). It carries out the reaction uridine(341) in tmRNA + S-adenosyl-L-methionine = 5-methyluridine(341) in tmRNA + S-adenosyl-L-homocysteine + H(+). In terms of biological role, dual-specificity methyltransferase that catalyzes the formation of 5-methyluridine at position 54 (m5U54) in all tRNAs, and that of position 341 (m5U341) in tmRNA (transfer-mRNA). This is tRNA/tmRNA (uracil-C(5))-methyltransferase from Shewanella sp. (strain MR-4).